Reading from the N-terminus, the 148-residue chain is Probable glucosamine 6-phosphate N-acetyltransferase (148 aa).

The region spanning 3 to 148 is the N-acetyltransferase domain; sequence ISINELNFDD…KQMALYLNGK (146 aa). Substrate is bound by residues threonine 25, 72–75, and 84–86; these read KFIH and EDV. Residues 86–88 and 94–99 each bind acetyl-CoA; these read VVV and LHGIGK. Substrate is bound by residues 115-116 and aspartate 120; that span reads YK. 129–131 is a binding site for acetyl-CoA; that stretch reads YCK. Glutamate 138 contacts substrate.

Belongs to the acetyltransferase family. GNA1 subfamily.

The catalysed reaction is D-glucosamine 6-phosphate + acetyl-CoA = N-acetyl-D-glucosamine 6-phosphate + CoA + H(+). The protein operates within nucleotide-sugar biosynthesis; UDP-N-acetyl-alpha-D-glucosamine biosynthesis; N-acetyl-alpha-D-glucosamine 1-phosphate from alpha-D-glucosamine 6-phosphate (route I): step 1/2. The chain is Probable glucosamine 6-phosphate N-acetyltransferase from Acanthamoeba polyphaga (Amoeba).